The primary structure comprises 238 residues: uncharacterized protein (238 aa).

Disordered regions lie at residues 123–167 (FRQG…VHGG) and 180–238 (SAMG…AKRR). Over residues 152–161 (SGHSPSPGRH) the composition is skewed to low complexity. Basic residues predominate over residues 207–238 (HRGHGHRFRLLAPRSRPRQRRGGGSRAAAKRR).

The protein belongs to the PNP/MTAP phosphorylase family.

This is an uncharacterized protein from Rhodospirillum rubrum.